We begin with the raw amino-acid sequence, 431 residues long: Mothers against decapentaplegic homolog 6 (431 aa).

The span at 1-15 (MFRSKRSGLVRRLWR) shows a compositional bias: basic residues. Residues 1 to 95 (MFRSKRSGLV…SPPGPGGGEA (95 aa)) form a disordered region. Polar residues predominate over residues 29–38 (GQSSERNATA). The segment covering 71–90 (PELPPPPPPPPPGGASPPGP) has biased composition (pro residues). One can recognise an MH1 domain in the interval 85 to 209 (ASPPGPGGGE…FSRLCGPESP (125 aa)). The Zn(2+) site is built by C139, C182, C194, and H199. Positions 235 to 245 (TETEATNSPNV) are enriched in polar residues. Residues 235-258 (TETEATNSPNVTPGEFSDASTSPD) are disordered. The MH2 domain maps to 265–431 (WCNVAYWEHR…WLEILLSNNR (167 aa)).

This sequence belongs to the dwarfin/SMAD family. As to expression, developing heart, eyes and limbs.

The protein localises to the nucleus. Functionally, transforming growth factor-beta superfamily receptors signaling occurs through the Smad family of intracellular mediators. SMAD6 is an inhibitory Smad (i-Smad) that negatively regulates signaling downstream of type I transforming growth factor-beta. Acts as a mediator of TGF-beta and BMP anti-inflammatory activities. Suppresses IL1R-TLR signaling through its direct interaction with PEL1, preventing NF-kappa-B activation, nuclear transport and NF-kappa-B-mediated expression of pro-inflammatory genes. Blocks the BMP-SMAD1 signaling pathway by competing with SMAD4 for receptor-activated SMAD1-binding. Binds to regulatory elements in target promoter regions. The protein is Mothers against decapentaplegic homolog 6 (SMAD6) of Gallus gallus (Chicken).